Reading from the N-terminus, the 330-residue chain is Probable integrase/recombinase protein MJ0367 (330 aa).

One can recognise a Core-binding (CB) domain in the interval 22–112; it reads IEETDKIKEY…LLKVFYRVLR (91 aa). The region spanning 136–325 is the Tyr recombinase domain; the sequence is QHYDAVDAEM…RAESLEFIKK (190 aa). Active-site residues include R177, K202, H275, R278, and H301. The active-site O-(3'-phospho-DNA)-tyrosine intermediate is Y310.

This sequence belongs to the 'phage' integrase family.

This is Probable integrase/recombinase protein MJ0367 from Methanocaldococcus jannaschii (strain ATCC 43067 / DSM 2661 / JAL-1 / JCM 10045 / NBRC 100440) (Methanococcus jannaschii).